We begin with the raw amino-acid sequence, 558 residues long: Kelch-like protein 23 (558 aa).

Positions 36 to 104 constitute a BTB domain; sequence TDITLQCPSG…AYTSQIEITE (69 aa). One can recognise a BACK domain in the interval 139–240; sequence CIGMHSFAEF…DPVYLKTALG (102 aa). Kelch repeat units follow at residues 274 to 320, 321 to 369, 370 to 416, 418 to 466, 467 to 508, and 510 to 557; these read TMYI…CLGP, NIYV…TLGG, CVYA…VLHD, IYVI…PLEN, KLYL…IMNG, and IYVT…CVYN.

This chain is Kelch-like protein 23 (KLHL23), found in Pongo abelii (Sumatran orangutan).